A 189-amino-acid polypeptide reads, in one-letter code: Parkinson disease protein 7 homolog (189 aa).

A2 bears the N-acetylalanine mark. Residues C46 and C53 are each lipidated (S-palmitoyl cysteine). Y67 carries the phosphotyrosine modification. C106 serves as the catalytic Nucleophile. Cysteine sulfinic acid (-SO2H); alternate is present on C106. C106 is lipidated: S-palmitoyl cysteine; alternate. Residue H126 is part of the active site. K130 participates in a covalent cross-link: Glycyl lysine isopeptide (Lys-Gly) (interchain with G-Cter in SUMO). The residue at position 148 (K148) is an N6-acetyllysine. At K182 the chain carries N6-succinyllysine.

Belongs to the peptidase C56 family. As to quaternary structure, homodimer. Binds EFCAB6/DJBP and PIAS2. Part of a ternary complex containing PARK7, EFCAB6/DJBP and AR. Interacts (via N-terminus) with OTUD7B. Interacts with BBS1, HIPK1, CLCF1 and MTERF. Forms a complex with PINK1 and PRKN. Interacts (via C-terminus) with NCF1; the interaction is enhanced by LPS and modulates NCF1 phosphorylation and membrane translocation. Interacts with NENF. Deglycase activity does not require glutathione as a cofactor, however, glycated glutathione constitutes a PARK7 substrate. serves as cofactor. Post-translationally, sumoylated on Lys-130 by PIAS2 or PIAS4; which is essential for cell-growth promoting activity and transforming activity. Undergoes cleavage of a C-terminal peptide and subsequent activation of protease activity in response to oxidative stress. In terms of tissue distribution, ubiquitous. Detected on epididymal sperm. Highly expressed in testis and prostate. Detected at lower levels in heart, lung, brain, liver, kidney, seminal vesicle, caput and corpus epididymis.

The protein resides in the cell membrane. It is found in the cytoplasm. Its subcellular location is the membrane raft. It localises to the nucleus. The protein localises to the mitochondrion. The protein resides in the endoplasmic reticulum. It carries out the reaction N(omega)-(1-hydroxy-2-oxopropyl)-L-arginyl-[protein] + H2O = lactate + L-arginyl-[protein] + H(+). The catalysed reaction is N(6)-(1-hydroxy-2-oxopropyl)-L-lysyl-[protein] + H2O = lactate + L-lysyl-[protein] + H(+). The enzyme catalyses S-(1-hydroxy-2-oxopropyl)-L-cysteinyl-[protein] + H2O = lactate + L-cysteinyl-[protein] + H(+). It catalyses the reaction N(omega)-(1-hydroxy-2-oxoethyl)-L-arginyl-[protein] + H2O = L-arginyl-[protein] + glycolate + H(+). It carries out the reaction N(6)-(1-hydroxy-2-oxoethyl)-L-lysyl-[protein] + H2O = glycolate + L-lysyl-[protein] + H(+). The catalysed reaction is S-(1-hydroxy-2-oxoethyl)-L-cysteinyl-[protein] + H2O = glycolate + L-cysteinyl-[protein] + H(+). The enzyme catalyses N(2)-(1-hydroxy-2-oxopropyl)-dGTP + H2O = lactate + dGTP + H(+). It catalyses the reaction N(2)-(1-hydroxy-2-oxopropyl)-GTP + H2O = lactate + GTP + H(+). It carries out the reaction N(2)-(1-hydroxy-2-oxopropyl)-GDP + H2O = lactate + GDP + H(+). The catalysed reaction is N(2)-(1-hydroxy-2-oxopropyl)-GMP + H2O = lactate + GMP + H(+). The enzyme catalyses N(2)-(1-hydroxy-2-oxoethyl)-dGTP + H2O = dGTP + glycolate + H(+). It catalyses the reaction N(2)-(1-hydroxy-2-oxoethyl)-GTP + H2O = glycolate + GTP + H(+). It carries out the reaction N(2)-(1-hydroxy-2-oxoethyl)-GDP + H2O = glycolate + GDP + H(+). The catalysed reaction is N(2)-(1-hydroxy-2-oxoethyl)-GMP + H2O = glycolate + GMP + H(+). The enzyme catalyses an N(2)-(1-hydroxy-2-oxopropyl)-guanosine in RNA + H2O = a guanosine in RNA + lactate + H(+). It catalyses the reaction an N(2)-(1-hydroxy-2-oxopropyl)-2'-deoxyguanosine in DNA + H2O = a 2'-deoxyguanosine in DNA + lactate + H(+). It carries out the reaction an N(2)-(1-hydroxy-2-oxoethyl)-guanosine in RNA + H2O = a guanosine in RNA + glycolate + H(+). The catalysed reaction is an N(2)-(1-hydroxy-2-oxoethyl)-2'-deoxyguanosine in DNA + H2O = a 2'-deoxyguanosine in DNA + glycolate + H(+). In terms of biological role, protein and nucleotide deglycase that catalyzes the deglycation of the Maillard adducts formed between amino groups of proteins or nucleotides and reactive carbonyl groups of glyoxals. Thus, functions as a protein deglycase that repairs methylglyoxal- and glyoxal-glycated proteins, and releases repaired proteins and lactate or glycolate, respectively. Deglycates cysteine, arginine and lysine residues in proteins, and thus reactivates these proteins by reversing glycation by glyoxals. Acts on early glycation intermediates (hemithioacetals and aminocarbinols), preventing the formation of advanced glycation endproducts (AGE) that cause irreversible damage. Also functions as a nucleotide deglycase able to repair glycated guanine in the free nucleotide pool (GTP, GDP, GMP, dGTP) and in DNA and RNA. Is thus involved in a major nucleotide repair system named guanine glycation repair (GG repair), dedicated to reversing methylglyoxal and glyoxal damage via nucleotide sanitization and direct nucleic acid repair. Also displays an apparent glyoxalase activity that in fact reflects its deglycase activity. Plays an important role in cell protection against oxidative stress and cell death acting as oxidative stress sensor and redox-sensitive chaperone and protease; functions probably related to its primary function. It is involved in neuroprotective mechanisms like the stabilization of NFE2L2 and PINK1 proteins, male fertility as a positive regulator of androgen signaling pathway as well as cell growth and transformation through, for instance, the modulation of NF-kappa-B signaling pathway. Eliminates hydrogen peroxide and protects cells against hydrogen peroxide-induced cell death. Required for correct mitochondrial morphology and function as well as for autophagy of dysfunctional mitochondria. Plays a role in regulating expression or stability of the mitochondrial uncoupling proteins SLC25A14 and SLC25A27 in dopaminergic neurons of the substantia nigra pars compacta and attenuates the oxidative stress induced by calcium entry into the neurons via L-type channels during pacemaking. Regulates astrocyte inflammatory responses, may modulate lipid rafts-dependent endocytosis in astrocytes and neuronal cells. In pancreatic islets, involved in the maintenance of mitochondrial reactive oxygen species (ROS) levels and glucose homeostasis in an age- and diet dependent manner. Protects pancreatic beta cells from cell death induced by inflammatory and cytotoxic setting. Binds to a number of mRNAs containing multiple copies of GG or CC motifs and partially inhibits their translation but dissociates following oxidative stress. Metal-binding protein able to bind copper as well as toxic mercury ions, enhances the cell protection mechanism against induced metal toxicity. In macrophages, interacts with the NADPH oxidase subunit NCF1 to direct NADPH oxidase-dependent ROS production, and protects against sepsis. This Rattus norvegicus (Rat) protein is Parkinson disease protein 7 homolog.